Consider the following 200-residue polypeptide: Phospholipase A2 inhibitor gamma subunit B (200 aa).

Positions 1–19 (MKSFLFCCLLGTFLAIGMC) are cleaved as a signal peptide. 8 disulfide bridges follow: Cys22–Cys46, Cys25–Cys32, Cys39–Cys67, Cys73–Cys94, Cys95–Cys100, Cys120–Cys145, Cys138–Cys165, and Cys171–Cys191. Asn33 is a glycosylation site (N-linked (GlcNAc...) asparagine).

It belongs to the CNF-like-inhibitor family. As to quaternary structure, heterodimer of subunit A and subunit B. In terms of tissue distribution, expressed by the liver.

The protein resides in the secreted. Its function is as follows. Inhibits the enzymatic activity of phospholipase A2 (PA2). This chain is Phospholipase A2 inhibitor gamma subunit B, found in Gloydius brevicaudus siniticus (Chinese mamushi).